We begin with the raw amino-acid sequence, 312 residues long: Porphobilinogen deaminase (312 aa).

Cys-241 carries the S-(dipyrrolylmethanemethyl)cysteine modification.

The protein belongs to the HMBS family. In terms of assembly, monomer. Requires dipyrromethane as cofactor.

The enzyme catalyses 4 porphobilinogen + H2O = hydroxymethylbilane + 4 NH4(+). Its pathway is porphyrin-containing compound metabolism; protoporphyrin-IX biosynthesis; coproporphyrinogen-III from 5-aminolevulinate: step 2/4. Tetrapolymerization of the monopyrrole PBG into the hydroxymethylbilane pre-uroporphyrinogen in several discrete steps. In Trichlorobacter lovleyi (strain ATCC BAA-1151 / DSM 17278 / SZ) (Geobacter lovleyi), this protein is Porphobilinogen deaminase.